The following is a 491-amino-acid chain: Protein nucleotidyltransferase YdiU (491 aa).

The ATP site is built by Gly92, Gly94, Arg95, Lys115, Asp127, Gly128, Arg178, and Arg185. The Proton acceptor role is filled by Asp254. Residues Asn255 and Asp264 each contribute to the Mg(2+) site. Residue Asp264 coordinates ATP.

The protein belongs to the SELO family. The cofactor is Mg(2+). Mn(2+) serves as cofactor.

It carries out the reaction L-seryl-[protein] + ATP = 3-O-(5'-adenylyl)-L-seryl-[protein] + diphosphate. It catalyses the reaction L-threonyl-[protein] + ATP = 3-O-(5'-adenylyl)-L-threonyl-[protein] + diphosphate. The catalysed reaction is L-tyrosyl-[protein] + ATP = O-(5'-adenylyl)-L-tyrosyl-[protein] + diphosphate. The enzyme catalyses L-histidyl-[protein] + UTP = N(tele)-(5'-uridylyl)-L-histidyl-[protein] + diphosphate. It carries out the reaction L-seryl-[protein] + UTP = O-(5'-uridylyl)-L-seryl-[protein] + diphosphate. It catalyses the reaction L-tyrosyl-[protein] + UTP = O-(5'-uridylyl)-L-tyrosyl-[protein] + diphosphate. Its function is as follows. Nucleotidyltransferase involved in the post-translational modification of proteins. It can catalyze the addition of adenosine monophosphate (AMP) or uridine monophosphate (UMP) to a protein, resulting in modifications known as AMPylation and UMPylation. In Mycolicibacterium paratuberculosis (strain ATCC BAA-968 / K-10) (Mycobacterium paratuberculosis), this protein is Protein nucleotidyltransferase YdiU.